The chain runs to 124 residues: Small ribosomal subunit protein uS12 (124 aa).

Asp-89 is subject to 3-methylthioaspartic acid.

It belongs to the universal ribosomal protein uS12 family. As to quaternary structure, part of the 30S ribosomal subunit. Contacts proteins S8 and S17. May interact with IF1 in the 30S initiation complex.

With S4 and S5 plays an important role in translational accuracy. Its function is as follows. Interacts with and stabilizes bases of the 16S rRNA that are involved in tRNA selection in the A site and with the mRNA backbone. Located at the interface of the 30S and 50S subunits, it traverses the body of the 30S subunit contacting proteins on the other side and probably holding the rRNA structure together. The combined cluster of proteins S8, S12 and S17 appears to hold together the shoulder and platform of the 30S subunit. This Edwardsiella ictaluri (strain 93-146) protein is Small ribosomal subunit protein uS12.